Here is a 396-residue protein sequence, read N- to C-terminus: Probable sugar efflux transporter (396 aa).

Over 1–14 the chain is Cytoplasmic; sequence MTTNTVSRKVAWLR. The helical transmembrane segment at 15–35 threads the bilayer; the sequence is VVTLAVAAFIFNTTEFVPVGL. Topologically, residues 36-49 are periplasmic; it reads LSDIAQSFHMQTAQ. The helical transmembrane segment at 50–70 threads the bilayer; it reads VGIMLTIYAWVVALMSLPFML. Topologically, residues 71-80 are cytoplasmic; it reads MTSQVERRKL. Residues 81-101 form a helical membrane-spanning segment; sequence LICLFVVFIASHVLSFLSWSF. Position 102 (Thr102) is a topological domain, periplasmic. The helical transmembrane segment at 103 to 123 threads the bilayer; that stretch reads VLVISRIGVAFAHAIFWSITA. Residues 124-135 lie on the Cytoplasmic side of the membrane; sequence SLAIRMAPAGKR. Residues 136–156 traverse the membrane as a helical segment; the sequence is AQALSLIATGTALAMVLGLPL. Residues 157–169 lie on the Periplasmic side of the membrane; it reads GRIVGQYFGWRMT. The chain crosses the membrane as a helical span at residues 170-190; sequence FFAIGIGALITLLCLIKLLPL. The Cytoplasmic segment spans residues 191–208; that stretch reads LPSEHSGSLKSLPLLFRR. A helical transmembrane segment spans residues 209–229; it reads PALMSIYLLTVVVVTAHYTAY. The Periplasmic segment spans residues 230 to 245; sequence SYIEPFVQNIAGFSAN. The helical transmembrane segment at 246-266 threads the bilayer; that stretch reads FATALLLLLGGAGIIGSVIFG. Topologically, residues 267–274 are cytoplasmic; that stretch reads KLGNQYAS. Residues 275–295 form a helical membrane-spanning segment; sequence ALVSTAIALLLVCLALLLPAA. Residues 296–298 lie on the Periplasmic side of the membrane; that stretch reads NSE. A helical membrane pass occupies residues 299 to 319; that stretch reads IHLGVLSIFWGIAMMIIGLGM. At 320–332 the chain is on the cytoplasmic side; that stretch reads QVKVLALAPDATD. The helical transmembrane segment at 333 to 353 threads the bilayer; that stretch reads VAMALFSGIFNIGIGAGALVG. Over 354-363 the chain is Periplasmic; sequence NQVSLHWSMS. Residues 364-384 form a helical membrane-spanning segment; that stretch reads MIGYVGTVPAFAALIWSIIIF. Over 385 to 396 the chain is Cytoplasmic; that stretch reads RRWPVTLEEQTQ.

It belongs to the major facilitator superfamily. SotB (TC 2.A.1.2) family.

The protein localises to the cell inner membrane. Functionally, involved in the efflux of sugars. The physiological role may be the reduction of the intracellular concentration of toxic sugars or sugar metabolites. The sequence is that of Probable sugar efflux transporter from Escherichia coli O157:H7.